The sequence spans 205 residues: Holliday junction branch migration complex subunit RuvA (205 aa).

The tract at residues 1–64 is domain I; the sequence is MIGRLNGILV…EDAQLLFGFN (64 aa). Residues 65–143 form a domain II region; sequence NKVERALFRE…NWGNDLFTPF (79 aa). Positions 144 to 156 are flexible linker; it reads SDSAVIEPFSDAT. Residues 157 to 205 form a domain III region; the sequence is IANNAADDAVSALVSLGYKLPQAQKAVKSVSKPDMSTEVLIKESLKSML.

Belongs to the RuvA family. Homotetramer. Forms an RuvA(8)-RuvB(12)-Holliday junction (HJ) complex. HJ DNA is sandwiched between 2 RuvA tetramers; dsDNA enters through RuvA and exits via RuvB. An RuvB hexamer assembles on each DNA strand where it exits the tetramer. Each RuvB hexamer is contacted by two RuvA subunits (via domain III) on 2 adjacent RuvB subunits; this complex drives branch migration. In the full resolvosome a probable DNA-RuvA(4)-RuvB(12)-RuvC(2) complex forms which resolves the HJ.

It is found in the cytoplasm. The RuvA-RuvB-RuvC complex processes Holliday junction (HJ) DNA during genetic recombination and DNA repair, while the RuvA-RuvB complex plays an important role in the rescue of blocked DNA replication forks via replication fork reversal (RFR). RuvA specifically binds to HJ cruciform DNA, conferring on it an open structure. The RuvB hexamer acts as an ATP-dependent pump, pulling dsDNA into and through the RuvAB complex. HJ branch migration allows RuvC to scan DNA until it finds its consensus sequence, where it cleaves and resolves the cruciform DNA. In Pseudoalteromonas translucida (strain TAC 125), this protein is Holliday junction branch migration complex subunit RuvA.